Consider the following 78-residue polypeptide: Acyl carrier protein (78 aa).

A Carrier domain is found at 2-77 (SDIEQRVKQA…SAIDYVTKKL (76 aa)). Ser37 is modified (O-(pantetheine 4'-phosphoryl)serine).

It belongs to the acyl carrier protein (ACP) family. 4'-phosphopantetheine is transferred from CoA to a specific serine of apo-ACP by AcpS. This modification is essential for activity because fatty acids are bound in thioester linkage to the sulfhydryl of the prosthetic group.

Its subcellular location is the cytoplasm. The protein operates within lipid metabolism; fatty acid biosynthesis. In terms of biological role, carrier of the growing fatty acid chain in fatty acid biosynthesis. The protein is Acyl carrier protein of Acinetobacter baumannii (strain AB307-0294).